A 472-amino-acid chain; its full sequence is Argininosuccinate lyase (472 aa).

It belongs to the lyase 1 family. Argininosuccinate lyase subfamily.

It is found in the cytoplasm. The enzyme catalyses 2-(N(omega)-L-arginino)succinate = fumarate + L-arginine. Its pathway is amino-acid biosynthesis; L-arginine biosynthesis; L-arginine from L-ornithine and carbamoyl phosphate: step 3/3. The polypeptide is Argininosuccinate lyase (Syntrophus aciditrophicus (strain SB)).